The following is a 368-amino-acid chain: Peptide chain release factor 2 (368 aa).

Gln-245 is subject to N5-methylglutamine.

Belongs to the prokaryotic/mitochondrial release factor family. Post-translationally, methylated by PrmC. Methylation increases the termination efficiency of RF2.

Its subcellular location is the cytoplasm. In terms of biological role, peptide chain release factor 2 directs the termination of translation in response to the peptide chain termination codons UGA and UAA. The polypeptide is Peptide chain release factor 2 (prfB) (Treponema pallidum (strain Nichols)).